The primary structure comprises 310 residues: Fucose-specific lectin (310 aa).

Repeat copies occupy residues methionine 1 to isoleucine 53, alanine 54 to lysine 103, phenylalanine 104 to asparagine 151, leucine 152 to alanine 209, proline 210 to threonine 256, and isoleucine 257 to glutamate 310. A 6 X approximate tandem repeats region spans residues methionine 1–glutamate 310. The beta-L-fucose site is built by arginine 25, glutamate 37, tryptophan 44, arginine 73, glutamate 85, tryptophan 94, arginine 126, glutamate 138, tryptophan 146, arginine 177, glutamine 189, tryptophan 198, arginine 230, glutamine 242, arginine 277, and glutamate 291.

It belongs to the fungal fucose-specific lectin family.

Its function is as follows. Lectin that specifically binds to L-fucose and weakly reacts with mannose and N-acetyl-neuraminic acid. Has strongest preference for the alpha-1,6-fucosylated chain (core fucose) on glycoproteins among alpha-1,2-, alpha-1,3-, alpha-1,4-, and alpha-1,6-fucosylated chains. Binds to fucose residues of IgE in mice and human, causing antigen-independent IgE-mediated mast cell activation and anaphylactoid reactions in mice and is possibly implicated in allergic response to Aspergillus oryzae in humans. Induces secretion of pro-inflammatory cytokines IL6 and IL8 implicated in ocular diseases such as mycotic keratitis, probably through its interaction with host toll-like receptors TLR2 and TLR4, followed by up-regulation of pro-inflammatory cytokines. In Aspergillus oryzae (Yellow koji mold), this protein is Fucose-specific lectin.